An 854-amino-acid chain; its full sequence is Protein translocase subunit SecA (854 aa).

ATP is bound by residues Q89, 107-111 (GEGKT), and D501.

Belongs to the SecA family. Monomer and homodimer. Part of the essential Sec protein translocation apparatus which comprises SecA, SecYEG and auxiliary proteins SecDF-YajC and YidC.

The protein localises to the cell inner membrane. It localises to the cytoplasm. The enzyme catalyses ATP + H2O + cellular proteinSide 1 = ADP + phosphate + cellular proteinSide 2.. Part of the Sec protein translocase complex. Interacts with the SecYEG preprotein conducting channel. Has a central role in coupling the hydrolysis of ATP to the transfer of proteins into and across the cell membrane, serving both as a receptor for the preprotein-SecB complex and as an ATP-driven molecular motor driving the stepwise translocation of polypeptide chains across the membrane. This chain is Protein translocase subunit SecA, found in Pelagibacter ubique (strain HTCC1062).